A 286-amino-acid chain; its full sequence is 4-hydroxybenzoate octaprenyltransferase (286 aa).

The next 7 helical transmembrane spans lie at glycine 21–methionine 40, isoleucine 95–valine 115, phenylalanine 142–valine 162, tryptophan 167–valine 187, glutamine 210–alanine 230, leucine 235–phenylalanine 255, and phenylalanine 266–isoleucine 286.

The protein belongs to the UbiA prenyltransferase family. The cofactor is Mg(2+).

Its subcellular location is the cell inner membrane. It catalyses the reaction all-trans-octaprenyl diphosphate + 4-hydroxybenzoate = 4-hydroxy-3-(all-trans-octaprenyl)benzoate + diphosphate. It participates in cofactor biosynthesis; ubiquinone biosynthesis. Catalyzes the prenylation of para-hydroxybenzoate (PHB) with an all-trans polyprenyl group. Mediates the second step in the final reaction sequence of ubiquinone-8 (UQ-8) biosynthesis, which is the condensation of the polyisoprenoid side chain with PHB, generating the first membrane-bound Q intermediate 3-octaprenyl-4-hydroxybenzoate. The chain is 4-hydroxybenzoate octaprenyltransferase from Shewanella baltica (strain OS155 / ATCC BAA-1091).